Consider the following 469-residue polypeptide: Bile acid receptor (469 aa).

A Glycyl lysine isopeptide (Lys-Gly) (interchain with G-Cter in SUMO1) cross-link involves residue lysine 119. A DNA-binding region (nuclear receptor) is located at residues 121 to 196; that stretch reads DELCVVCGDR…MGMLAECLLT (76 aa). Residues 124–144 form an NR C4-type zinc finger; that stretch reads CVVCGDRASGYHYNALTCEGC. Residues serine 132 and serine 151 each carry the phosphoserine; by PKC/PRKCA modification. Lysine 154 bears the N6-acetyllysine; by EP300 mark. The NR C4-type zinc finger occupies 160–184; that stretch reads CKNGGNCVMDMYMRRKCQDCRLRKC. N6-methyllysine; by SETD7 is present on lysine 203. Lysine 210 carries the N6-acetyllysine; by EP300 modification. The NR LBD domain maps to 245–469; the sequence is DQQTLLDYIM…PLLCEIWDVQ (225 aa). Lysine 272 participates in a covalent cross-link: Glycyl lysine isopeptide (Lys-Gly) (interchain with G-Cter in SUMO1). Arginine 328 contacts 3beta,7beta-dihydroxy-5beta-cholan-24-oate. Positions 328, 358, and 366 each coordinate chenodeoxycholate. Tyrosine 366 contacts 3beta,7beta-dihydroxy-5beta-cholan-24-oate. Phosphothreonine; by PKC/PRKCZ is present on threonine 439. Histidine 444 is a binding site for chenodeoxycholate.

It belongs to the nuclear hormone receptor family. NR1 subfamily. Heterodimer with RXRA; the heterodimerization enhances the binding affinity for LXXLL motifs from coactivators. Binds DNA predominantly as a heterodimer with RXRA. After activation by agonist binding interacts with coactivators. Interacts with NCOA1, NCOA2, PPARGC1A, CARM1, SETD7, PRMT1, GPS2, SMARCA4 and MED1, EP300 and SMARCD1. Interacts with XRCC5 and XRCC6; decreasing NR1H4/FXR transactivation activity towards ABCB11/BSEP. Interacts with PAGR1 AND NCOA6; indicative for an association with an MLL2/MLL3 complex (ASCOM). In terms of processing, acetylated by EP300. Lys-210 as is the major acetylation site for EP300; the dynamicly regulated acetylation inhibits heterodimerization with RXRA and transactivation activity. Deacetylated by SIRT1. Post-translationally, methylation may increase transactivation of target genes. Phosphorylation by PKC/PRKCA increases transactivation activity by promoting association with PPARGC1A. In terms of processing, sumoylated upon ligand binding.

The protein resides in the nucleus. Functionally, ligand-activated transcription factor. Receptor for bile acids (BAs) such as chenodeoxycholic acid (CDCA), lithocholic acid, deoxycholic acid (DCA) and allocholic acid (ACA). Plays a essential role in BA homeostasis through the regulation of genes involved in BA synthesis, conjugation and enterohepatic circulation. Also regulates lipid and glucose homeostasis and is involved innate immune response. The FXR-RXR heterodimer binds predominantly to farnesoid X receptor response elements (FXREs) containing two inverted repeats of the consensus sequence 5'-AGGTCA-3' in which the monomers are spaced by 1 nucleotide (IR-1) but also to tandem repeat DR1 sites with lower affinity, and can be activated by either FXR or RXR-specific ligands. It is proposed that monomeric nuclear receptors such as NR5A2/LRH-1 bound to coregulatory nuclear responsive element (NRE) halfsites located in close proximity to FXREs modulate transcriptional activity. In the liver activates transcription of the corepressor NR0B2 thereby indirectly inhibiting CYP7A1 and CYP8B1 (involved in BA synthesis) implicating at least in part histone demethylase KDM1A resulting in epigenomic repression, and SLC10A1/NTCP (involved in hepatic uptake of conjugated BAs). Activates transcription of the repressor MAFG (involved in regulation of BA synthesis). Activates transcription of SLC27A5/BACS and BAAT (involved in BA conjugation), ABCB11/BSEP (involved in bile salt export) by directly recruiting histone methyltransferase CARM1, and ABCC2/MRP2 (involved in secretion of conjugated BAs) and ABCB4 (involved in secretion of phosphatidylcholine in the small intestine). Activates transcription of SLC27A5/BACS and BAAT (involved in BA conjugation), ABCB11/BSEP (involved in bile salt export) by directly recruiting histone methyltransferase CARM1, and ABCC2/MRP2 (involved in secretion of conjugated BAs) and ABCB4 (involved in secretion of phosphatidylcholine in the small intestine). In the intestine activates FGF19 expression and secretion leading to hepatic CYP7A1 repression. The function also involves the coordinated induction of hepatic KLB/beta-klotho expression. Regulates transcription of liver UGT2B4 and SULT2A1 involved in BA detoxification; binding to the UGT2B4 promoter seems to imply a monomeric transactivation independent of RXRA. Modulates lipid homeostasis by activating liver NR0B2/SHP-mediated repression of SREBF1 (involved in de novo lipogenesis), expression of PLTP (involved in HDL formation), SCARB1 (involved in HDL hepatic uptake), APOE, APOC1, APOC4, PPARA (involved in beta-oxidation of fatty acids), VLDLR and SDC1 (involved in the hepatic uptake of LDL and IDL remnants), and inhibiting expression of MTTP (involved in VLDL assembly). Increases expression of APOC2 (promoting lipoprotein lipase activity implicated in triglyceride clearance). Transrepresses APOA1 involving a monomeric competition with NR2A1 for binding to a DR1 element. Also reduces triglyceride clearance by inhibiting expression of ANGPTL3 and APOC3 (both involved in inhibition of lipoprotein lipase). Involved in glucose homeostasis by modulating hepatic gluconeogenesis through activation of NR0B2/SHP-mediated repression of respective genes. Modulates glycogen synthesis (inducing phosphorylation of glycogen synthase kinase-3). Modulates glucose-stimulated insulin secretion and is involved in insulin resistance. Involved in intestinal innate immunity. Plays a role in protecting the distal small intestine against bacterial overgrowth and preservation of the epithelial barrier. Down-regulates inflammatory cytokine expression in several types of immune cells including macrophages and mononuclear cells. Mediates trans-repression of TLR4-induced cytokine expression; the function seems to require its sumoylation and prevents N-CoR nuclear receptor corepressor clearance from target genes such as IL1B and NOS2. Involved in the TLR9-mediated protective mechanism in intestinal inflammation. Plays an anti-inflammatory role in liver inflammation; proposed to inhibit pro-inflammatory (but not antiapoptotic) NF-kappa-B signaling. This chain is Bile acid receptor (Nr1h4), found in Rattus norvegicus (Rat).